Consider the following 837-residue polypeptide: Tuftelin-interacting protein 11 (837 aa).

Composition is skewed to basic and acidic residues over residues 1 to 13 (MSLS…GEGR) and 53 to 64 (VWAERDSDDERP). 3 disordered regions span residues 1–21 (MSLS…DDER), 53–72 (VWAE…KRAR), and 85–133 (LKKG…KGFA). Positions 1–50 (MSLSHLYRDGEGRIDDDDDERENFEITDWDLQNEFNPNRQRHWQTKEEAT) are required for interaction with DHX15. Phosphoserine occurs at positions 2, 59, and 98. Acidic residues predominate over residues 91–102 (EEAELEDSDDEE). A compositionally biased stretch (basic and acidic residues) spans 103–116 (KPVKQDDFPKDFGP). S144 bears the Phosphoserine mark. Residues 149-195 (TKGIGQKLLQKMGYVPGRGLGKNAQGIINPIEAKQRKGKGAVGAYGS) enclose the G-patch domain. The segment at 179–236 (IEAKQRKGKGAVGAYGSERTTQSMQDFPVVDSEEEAEEEFQKELSQWRKDPSGSKKKP) is disordered. S210 bears the Phosphoserine mark. The segment covering 217-231 (EFQKELSQWRKDPSG) has biased composition (basic and acidic residues). Residues 700–705 (VKDKFN) carry the Nuclear localization signal motif. Positions 710 to 734 (IMNRAVSSNVGAYMQPGARENIAYL) are required for nuclear speckle localization.

The protein belongs to the TFP11/STIP family. In terms of assembly, identified in the spliceosome C complex. Found in the Intron Large (IL) complex, a post-mRNA release spliceosomal complex containing the excised intron, U2, U5 and U6 snRNPs, and splicing factors. Interacts with TUFT1. Interacts with DHX15; indicative for a recruitment of DHX15 to the IL complex. Interacts with GCFC2.

It localises to the cytoplasm. Its subcellular location is the nucleus. In terms of biological role, involved in pre-mRNA splicing, specifically in spliceosome disassembly during late-stage splicing events. Intron turnover seems to proceed through reactions in two lariat-intron associated complexes termed Intron Large (IL) and Intron Small (IS). In cooperation with DHX15 seems to mediate the transition of the U2, U5 and U6 snRNP-containing IL complex to the snRNP-free IS complex leading to efficient debranching and turnover of excised introns. May play a role in the differentiation of ameloblasts and odontoblasts or in the forming of the enamel extracellular matrix. The protein is Tuftelin-interacting protein 11 (TFIP11) of Pan troglodytes (Chimpanzee).